Reading from the N-terminus, the 1960-residue chain is Exophilin-5 (1960 aa).

The RabBD domain occupies 7-63 (GFDFSFLNEEEARKILQVLERNEELRRAEKDRISKLQKTKRDIRWLQGATGEWFEEI). Composition is skewed to polar residues over residues 325 to 334 (ASPATGSFTA), 342 to 366 (DTQN…LSSI), and 635 to 645 (SQSSSFPDSTA). Disordered regions lie at residues 325-366 (ASPA…LSSI), 616-645 (TPAS…DSTA), 672-720 (HSTD…TGLP), 734-835 (DFQN…SSNT), and 910-976 (FSRS…KGRV). The span at 673 to 682 (STDSLSLTDT) shows a compositional bias: low complexity. Residues 692 to 707 (NSEKDMDVSVSKDEQL) are compositionally biased toward basic and acidic residues. Residues Ser-799 and Ser-802 each carry the phosphoserine modification. 2 stretches are compositionally biased toward polar residues: residues 808 to 835 (ESGT…SSNT) and 910 to 920 (FSRSLSDQDPG). Positions 921-932 (QEQREEKDKATK) are enriched in basic and acidic residues. A compositionally biased stretch (polar residues) spans 933–945 (SQDNQLAVNSTDN). Ser-1027 carries the phosphoserine modification. The disordered stretch occupies residues 1035–1095 (QESKGTVASV…PKATKKMTDM (61 aa)). The span at 1062-1074 (GKSTSDKPSSPES) shows a compositional bias: polar residues. A phosphoserine mark is found at Ser-1083 and Ser-1117. Disordered stretches follow at residues 1291–1375 (AQVQ…LSRE), 1389–1493 (PLLH…DSES), and 1510–1759 (EAQP…EPHL). The segment covering 1318–1336 (PESKDVSQLPDRETSKSTL) has biased composition (basic and acidic residues). A compositionally biased stretch (polar residues) spans 1356-1365 (KEISPSNVSK). Basic and acidic residues predominate over residues 1392 to 1403 (HQEKGAGKEHTK). 2 stretches are compositionally biased toward polar residues: residues 1470 to 1493 (RETS…DSES) and 1520 to 1533 (SEAS…TNTA). Ser-1493 is subject to Phosphoserine. Basic and acidic residues-rich tracts occupy residues 1534–1546 (EMRK…HMLT) and 1561–1571 (TNTDETKDRYS). Residues 1572–1586 (GKHRLAAISKASKRI) are compositionally biased toward basic residues. Positions 1637–1657 (ESSQMNVDKSETLLQETTVSS) are enriched in polar residues. Phosphoserine is present on residues Ser-1724, Ser-1739, Ser-1789, and Ser-1819. The segment covering 1732-1741 (TQKSTINSHC) has biased composition (polar residues). 2 disordered regions span residues 1828-1847 (ESES…STSS) and 1906-1960 (VNSP…ESEL). A compositionally biased stretch (acidic residues) spans 1939–1950 (WDTDTTTDDEYY). A compositionally biased stretch (basic and acidic residues) spans 1951–1960 (LDEKDKESEL).

Interacts with RAB27A.

Its function is as follows. May act as Rab effector protein and play a role in vesicle trafficking. In Mus musculus (Mouse), this protein is Exophilin-5.